The following is a 118-amino-acid chain: Ribosome-binding factor A (118 aa).

This sequence belongs to the RbfA family. Monomer. Binds 30S ribosomal subunits, but not 50S ribosomal subunits or 70S ribosomes.

It localises to the cytoplasm. Functionally, one of several proteins that assist in the late maturation steps of the functional core of the 30S ribosomal subunit. Associates with free 30S ribosomal subunits (but not with 30S subunits that are part of 70S ribosomes or polysomes). Required for efficient processing of 16S rRNA. May interact with the 5'-terminal helix region of 16S rRNA. This is Ribosome-binding factor A from Streptococcus pyogenes serotype M1.